A 445-amino-acid polypeptide reads, in one-letter code: Maltoporin (445 aa).

Positions 1 to 24 (MITLRKLPLAVAVAAGVMSAQAMA) are cleaved as a signal peptide.

It belongs to the porin LamB (TC 1.B.3) family. In terms of assembly, homotrimer formed of three 18-stranded antiparallel beta-barrels, containing three independent channels.

It is found in the cell outer membrane. It carries out the reaction beta-maltose(in) = beta-maltose(out). Involved in the transport of maltose and maltodextrins. This Shigella flexneri protein is Maltoporin.